We begin with the raw amino-acid sequence, 185 residues long: Ribosome-recycling factor (185 aa).

This sequence belongs to the RRF family.

The protein localises to the cytoplasm. Functionally, responsible for the release of ribosomes from messenger RNA at the termination of protein biosynthesis. May increase the efficiency of translation by recycling ribosomes from one round of translation to another. The chain is Ribosome-recycling factor from Proteus mirabilis (strain HI4320).